Here is a 235-residue protein sequence, read N- to C-terminus: Ribosomal RNA-processing protein 17 (235 aa).

Residues 49–110 are a coiled coil; sequence QRQKKAQEFI…AKNDKTEDLQ (62 aa). Over residues 99–108 the composition is skewed to basic and acidic residues; it reads EDAKNDKTED. Disordered regions lie at residues 99 to 138 and 209 to 235; these read EDAKNDKTEDLQVESDESWHGFDSDKDDGDNDNNESSVKP and RVKKFRYLTKNERRINQRKANDNKRRR. 3 positions are modified to phosphoserine: Ser113, Ser116, and Ser122. The segment covering 217 to 235 has biased composition (basic and acidic residues); the sequence is TKNERRINQRKANDNKRRR.

Belongs to the RRP17 family.

It is found in the nucleus. The protein localises to the nucleolus. In terms of biological role, essential protein involved in ribosomal RNA processing. This Saccharomyces cerevisiae (strain ATCC 204508 / S288c) (Baker's yeast) protein is Ribosomal RNA-processing protein 17 (RRP17).